The sequence spans 168 residues: Vasopressin-neurophysin 2-copeptin (168 aa).

An N-terminal signal peptide occupies residues 1–23; it reads MLARMLNTTLSACFLSLLAFSSA. Cys24 and Cys29 form a disulfide bridge. Residue Gly32 is modified to Glycine amide. 7 disulfide bridges follow: Cys45–Cys89, Cys48–Cys62, Cys56–Cys79, Cys63–Cys69, Cys96–Cys108, Cys102–Cys120, and Cys109–Cys114. Residue Asn135 is glycosylated (N-linked (GlcNAc...) asparagine).

Belongs to the vasopressin/oxytocin family. In terms of assembly, interacts with vasopressin receptors V1bR/AVPR1B (Ki=85 pM), V1aR/AVPR1A (Ki=0.6 nM) and V2R/AVPR2 (Ki=4.9 nM). Interacts with oxytocin receptor (OXTR) (Ki=110 nM).

It is found in the secreted. Neurophysin 2 specifically binds vasopressin. Its function is as follows. Vasopressin has a direct antidiuretic action on the kidney, it also causes vasoconstriction of the peripheral vessels. Acts by binding to vasopressin receptors (V1bR/AVPR1B, V1aR/AVPR1A, and V2R/AVPR2). This Mus musculus (Mouse) protein is Vasopressin-neurophysin 2-copeptin (Avp).